The chain runs to 116 residues: Large ribosomal subunit protein uL18 (116 aa).

The protein belongs to the universal ribosomal protein uL18 family. Part of the 50S ribosomal subunit; part of the 5S rRNA/L5/L18/L25 subcomplex. Contacts the 5S and 23S rRNAs.

Functionally, this is one of the proteins that bind and probably mediate the attachment of the 5S RNA into the large ribosomal subunit, where it forms part of the central protuberance. This chain is Large ribosomal subunit protein uL18, found in Shewanella denitrificans (strain OS217 / ATCC BAA-1090 / DSM 15013).